The following is a 527-amino-acid chain: Peptidoglycan O-acetyltransferase (527 aa).

The next 11 helical transmembrane spans lie at 11–31 (VFVLLFNTPLFIFAFLPVGFL), 55–75 (LFFYAFWNVKYLPLLVGSIVF), 96–116 (LILGLIANVSLLGFFKYTDFF), 131–151 (LHLILPLAISFFTLQQIAYLM), 187–207 (HFLDYALFVSFFPQLIAGPIV), 228–248 (NIALGLFIFSIGLFKKVVIAD), 280–300 (LYFDFSGYCDMAIGIGLFFNI), 352–372 (LILVFLIGGFWHGAGWTFIIW), 397–417 (MPKILAWLITFNFINLAWVFF), 463–483 (IMYASPTFKMCVLMIIISFCL), and 505–525 (LLLSIGFLFIFASSQSVFLYF). Histidine 363 is an active-site residue.

The protein belongs to the membrane-bound acyltransferase family.

Its subcellular location is the cell membrane. Catalyzes the O-acetylation of peptidoglycan (PG), an important mechanism that appears to confer lysozyme resistance and contributes to pathogen persistence in the host. In Helicobacter pylori (strain ATCC 700392 / 26695) (Campylobacter pylori), this protein is Peptidoglycan O-acetyltransferase (patA).